Here is a 299-residue protein sequence, read N- to C-terminus: 33 kDa chaperonin (299 aa).

2 cysteine pairs are disulfide-bonded: Cys240–Cys242 and Cys273–Cys276.

It belongs to the HSP33 family. In terms of processing, under oxidizing conditions two disulfide bonds are formed involving the reactive cysteines. Under reducing conditions zinc is bound to the reactive cysteines and the protein is inactive.

The protein resides in the cytoplasm. Its function is as follows. Redox regulated molecular chaperone. Protects both thermally unfolding and oxidatively damaged proteins from irreversible aggregation. Plays an important role in the bacterial defense system toward oxidative stress. This is 33 kDa chaperonin from Gloeothece citriformis (strain PCC 7424) (Cyanothece sp. (strain PCC 7424)).